Consider the following 212-residue polypeptide: Peptide methionine sulfoxide reductase MsrA (212 aa).

Cysteine 51 is an active-site residue.

This sequence belongs to the MsrA Met sulfoxide reductase family.

The catalysed reaction is L-methionyl-[protein] + [thioredoxin]-disulfide + H2O = L-methionyl-(S)-S-oxide-[protein] + [thioredoxin]-dithiol. It carries out the reaction [thioredoxin]-disulfide + L-methionine + H2O = L-methionine (S)-S-oxide + [thioredoxin]-dithiol. Its function is as follows. Has an important function as a repair enzyme for proteins that have been inactivated by oxidation. Catalyzes the reversible oxidation-reduction of methionine sulfoxide in proteins to methionine. In Vibrio parahaemolyticus serotype O3:K6 (strain RIMD 2210633), this protein is Peptide methionine sulfoxide reductase MsrA.